The following is a 147-amino-acid chain: Sec-independent protein translocase protein TatB (147 aa).

The helical transmembrane segment at 2-22 (FDGIGFMELLLIGVLGLVVLG) threads the bilayer. The tract at residues 68-147 (ESKGLSNLSP…DTRSNPKANG (80 aa)) is disordered. Over residues 71-97 (GLSNLSPELQESIDQLKQAAQSVNRPY) the composition is skewed to polar residues. The span at 112–133 (PASQSVSSEASPTASSAPTSEP) shows a compositional bias: low complexity.

Belongs to the TatB family. The Tat system comprises two distinct complexes: a TatABC complex, containing multiple copies of TatA, TatB and TatC subunits, and a separate TatA complex, containing only TatA subunits. Substrates initially bind to the TatABC complex, which probably triggers association of the separate TatA complex to form the active translocon.

It localises to the cell inner membrane. In terms of biological role, part of the twin-arginine translocation (Tat) system that transports large folded proteins containing a characteristic twin-arginine motif in their signal peptide across membranes. Together with TatC, TatB is part of a receptor directly interacting with Tat signal peptides. TatB may form an oligomeric binding site that transiently accommodates folded Tat precursor proteins before their translocation. This is Sec-independent protein translocase protein TatB from Shewanella sp. (strain MR-4).